The sequence spans 379 residues: Cytochrome b (379 aa).

4 consecutive transmembrane segments (helical) span residues 33–53, 77–98, 113–133, and 178–198; these read FGSL…FLAM, WMIR…FIHV, WNVG…GYVL, and FFAL…IHLL. Residues His83 and His97 each contribute to the heme b site. Positions 182 and 196 each coordinate heme b. Residue His201 coordinates a ubiquinone. The next 4 membrane-spanning stretches (helical) occupy residues 226–246, 288–308, 320–340, and 347–367; these read TKDF…ALFY, LGGV…PFLQ, LSQF…WIGG, and FISI…FIMP.

Belongs to the cytochrome b family. As to quaternary structure, the cytochrome bc1 complex contains 11 subunits: 3 respiratory subunits (MT-CYB, CYC1 and UQCRFS1), 2 core proteins (UQCRC1 and UQCRC2) and 6 low-molecular weight proteins (UQCRH/QCR6, UQCRB/QCR7, UQCRQ/QCR8, UQCR10/QCR9, UQCR11/QCR10 and a cleavage product of UQCRFS1). This cytochrome bc1 complex then forms a dimer. It depends on heme b as a cofactor.

It is found in the mitochondrion inner membrane. Functionally, component of the ubiquinol-cytochrome c reductase complex (complex III or cytochrome b-c1 complex) that is part of the mitochondrial respiratory chain. The b-c1 complex mediates electron transfer from ubiquinol to cytochrome c. Contributes to the generation of a proton gradient across the mitochondrial membrane that is then used for ATP synthesis. This is Cytochrome b (MT-CYB) from Lepilemur septentrionalis (Northern sportive lemur).